Consider the following 157-residue polypeptide: MAKKKGNLGSSTIAQNKKARFEYHIDETFEAGLSLAGWEVKSLRAGKAQLTDTYILIKNGEAWLLGSHITPLNTVSTHVVADPSRTRKLLLHRKEIAKIFSRTQDKGHTCVPLKLYWKKNLVKCELALVRGKKLHDKRATEKARDWNREKARIMRAH.

This sequence belongs to the SmpB family.

It is found in the cytoplasm. In terms of biological role, required for rescue of stalled ribosomes mediated by trans-translation. Binds to transfer-messenger RNA (tmRNA), required for stable association of tmRNA with ribosomes. tmRNA and SmpB together mimic tRNA shape, replacing the anticodon stem-loop with SmpB. tmRNA is encoded by the ssrA gene; the 2 termini fold to resemble tRNA(Ala) and it encodes a 'tag peptide', a short internal open reading frame. During trans-translation Ala-aminoacylated tmRNA acts like a tRNA, entering the A-site of stalled ribosomes, displacing the stalled mRNA. The ribosome then switches to translate the ORF on the tmRNA; the nascent peptide is terminated with the 'tag peptide' encoded by the tmRNA and targeted for degradation. The ribosome is freed to recommence translation, which seems to be the essential function of trans-translation. The polypeptide is SsrA-binding protein (Chromohalobacter salexigens (strain ATCC BAA-138 / DSM 3043 / CIP 106854 / NCIMB 13768 / 1H11)).